The chain runs to 343 residues: Phosphate acyltransferase (343 aa).

Belongs to the PlsX family. Homodimer. Probably interacts with PlsY.

It localises to the cytoplasm. It catalyses the reaction a fatty acyl-[ACP] + phosphate = an acyl phosphate + holo-[ACP]. It functions in the pathway lipid metabolism; phospholipid metabolism. Functionally, catalyzes the reversible formation of acyl-phosphate (acyl-PO(4)) from acyl-[acyl-carrier-protein] (acyl-ACP). This enzyme utilizes acyl-ACP as fatty acyl donor, but not acyl-CoA. The chain is Phosphate acyltransferase from Coxiella burnetii (strain RSA 331 / Henzerling II).